Reading from the N-terminus, the 228-residue chain is 7-cyano-7-deazaguanine synthase (228 aa).

8-18 (LSGGLDSTTCL) is a binding site for ATP. Positions 188, 198, 201, and 204 each coordinate Zn(2+).

The protein belongs to the QueC family. Requires Zn(2+) as cofactor.

It carries out the reaction 7-carboxy-7-deazaguanine + NH4(+) + ATP = 7-cyano-7-deazaguanine + ADP + phosphate + H2O + H(+). It participates in purine metabolism; 7-cyano-7-deazaguanine biosynthesis. Its function is as follows. Catalyzes the ATP-dependent conversion of 7-carboxy-7-deazaguanine (CDG) to 7-cyano-7-deazaguanine (preQ(0)). This is 7-cyano-7-deazaguanine synthase from Legionella pneumophila (strain Paris).